Here is a 184-residue protein sequence, read N- to C-terminus: ATP synthase subunit b, chloroplastic (184 aa).

The chain crosses the membrane as a helical span at residues 27-49 (LATNPINLSVVLGVLIFFGKGVL).

This sequence belongs to the ATPase B chain family. In terms of assembly, F-type ATPases have 2 components, F(1) - the catalytic core - and F(0) - the membrane proton channel. F(1) has five subunits: alpha(3), beta(3), gamma(1), delta(1), epsilon(1). F(0) has four main subunits: a(1), b(1), b'(1) and c(10-14). The alpha and beta chains form an alternating ring which encloses part of the gamma chain. F(1) is attached to F(0) by a central stalk formed by the gamma and epsilon chains, while a peripheral stalk is formed by the delta, b and b' chains.

The protein resides in the plastid. It is found in the chloroplast thylakoid membrane. In terms of biological role, f(1)F(0) ATP synthase produces ATP from ADP in the presence of a proton or sodium gradient. F-type ATPases consist of two structural domains, F(1) containing the extramembraneous catalytic core and F(0) containing the membrane proton channel, linked together by a central stalk and a peripheral stalk. During catalysis, ATP synthesis in the catalytic domain of F(1) is coupled via a rotary mechanism of the central stalk subunits to proton translocation. Component of the F(0) channel, it forms part of the peripheral stalk, linking F(1) to F(0). This chain is ATP synthase subunit b, chloroplastic, found in Oenothera argillicola (Appalachian evening primrose).